Reading from the N-terminus, the 253-residue chain is Protein phosphatase CheZ (253 aa).

The tract at residues 1–84 (MTQEELDALM…EWPPPPPTEE (84 aa)) is disordered. The segment covering 21-69 (LETKEETKEEAKEEAKEEAKEEAKEKEEIKEESSSQKMTVKKEDAEKYG) has biased composition (basic and acidic residues).

The protein belongs to the CheZ family. Interacts with ChePep; this interaction is essential for each other polar localization.

The protein localises to the cytoplasm. Its function is as follows. Plays an important role in bacterial chemotaxis signal transduction pathway by accelerating the dephosphorylation of phosphorylated CheY (CheY-P). Also dephosphorylates CheV2 but not CheV1 or CheV3. In addition, forms a distinct chemotaxis regulatory complex with ChePep independently of the core chemotaxis signaling proteins. The protein is Protein phosphatase CheZ of Helicobacter pylori (strain ATCC 700392 / 26695) (Campylobacter pylori).